Here is a 186-residue protein sequence, read N- to C-terminus: ADP-ribosylation factor-like protein 6 (186 aa).

Gly2 carries the N-myristoyl glycine lipid modification. GTP-binding positions include 24-31 (GLDNSGKT), Thr50, 69-73 (DMSGQ), Gly72, 130-133 (NKMD), and Ala164. Thr50 is a binding site for Mg(2+).

Belongs to the small GTPase superfamily. Arf family. In terms of assembly, interacts with SEC61B, ARL6IP1, ARL6IP2, ARL6IP3, ARL6IP4 ARL6IP5 and ARL6IP6. Interacts (GTP-bound form) with the BBSome a complex that contains BBS1, BBS2, BBS4, BBS5, BBS7, BBS8/TTC8, BBS9 and BBIP10. Interacts (GTP-free form) with IFT27. As to expression, most abundant in brain and kidney. Expressed in heart and eye. Isoform 2 is expressed only in the retina.

Its subcellular location is the cell projection. It is found in the cilium membrane. It localises to the cytoplasm. The protein resides in the cytoskeleton. The protein localises to the cilium axoneme. Its subcellular location is the cilium basal body. Functionally, involved in membrane protein trafficking at the base of the ciliary organelle. Mediates recruitment onto plasma membrane of the BBSome complex which would constitute a coat complex required for sorting of specific membrane proteins to the primary cilia. Together with BBS1, is necessary for correct trafficking of PKD1 to primary cilia. Together with the BBSome complex and LTZL1, controls SMO ciliary trafficking and contributes to the sonic hedgehog (SHH) pathway regulation. May regulate cilia assembly and disassembly and subsequent ciliary signaling events such as the Wnt signaling cascade. Isoform 2 may be required for proper retinal function and organization. The chain is ADP-ribosylation factor-like protein 6 (Arl6) from Mus musculus (Mouse).